We begin with the raw amino-acid sequence, 97 residues long: YcgL domain-containing protein PSPTO_3921 (97 aa).

One can recognise a YcgL domain in the interval 3–87 (RICSIYRSPK…AEDEYIEHLP (85 aa)).

The sequence is that of YcgL domain-containing protein PSPTO_3921 from Pseudomonas syringae pv. tomato (strain ATCC BAA-871 / DC3000).